We begin with the raw amino-acid sequence, 357 residues long: UDP-N-acetylglucosamine--N-acetylmuramyl-(pentapeptide) pyrophosphoryl-undecaprenol N-acetylglucosamine transferase (357 aa).

UDP-N-acetyl-alpha-D-glucosamine-binding positions include T14–G16, N120, R164, S194, and Q291.

The protein belongs to the glycosyltransferase 28 family. MurG subfamily.

It is found in the cell inner membrane. It catalyses the reaction di-trans,octa-cis-undecaprenyl diphospho-N-acetyl-alpha-D-muramoyl-L-alanyl-D-glutamyl-meso-2,6-diaminopimeloyl-D-alanyl-D-alanine + UDP-N-acetyl-alpha-D-glucosamine = di-trans,octa-cis-undecaprenyl diphospho-[N-acetyl-alpha-D-glucosaminyl-(1-&gt;4)]-N-acetyl-alpha-D-muramoyl-L-alanyl-D-glutamyl-meso-2,6-diaminopimeloyl-D-alanyl-D-alanine + UDP + H(+). It participates in cell wall biogenesis; peptidoglycan biosynthesis. Its function is as follows. Cell wall formation. Catalyzes the transfer of a GlcNAc subunit on undecaprenyl-pyrophosphoryl-MurNAc-pentapeptide (lipid intermediate I) to form undecaprenyl-pyrophosphoryl-MurNAc-(pentapeptide)GlcNAc (lipid intermediate II). The protein is UDP-N-acetylglucosamine--N-acetylmuramyl-(pentapeptide) pyrophosphoryl-undecaprenol N-acetylglucosamine transferase of Fusobacterium nucleatum subsp. nucleatum (strain ATCC 25586 / DSM 15643 / BCRC 10681 / CIP 101130 / JCM 8532 / KCTC 2640 / LMG 13131 / VPI 4355).